The following is a 1058-amino-acid chain: Carbamoyl phosphate synthase large chain (1058 aa).

The segment at 1–401 (MPKRTDIKKI…SLLKACRSLE (401 aa)) is carboxyphosphate synthetic domain. ATP is bound by residues Arg129, Arg169, Gly175, Gly176, Lys208, Ile210, Glu215, Gly241, Ile242, His243, Gln284, and Glu298. The ATP-grasp 1 domain occupies 133 to 327 (KALMKALKQP…IAKIAAKIAI (195 aa)). Residues Gln284, Glu298, and Asn300 each coordinate Mg(2+). Residues Gln284, Glu298, and Asn300 each coordinate Mn(2+). Positions 402–546 (IGIYHNECKE…YSTYAFENES (145 aa)) are oligomerization domain. The interval 547–929 (QASPNKSILV…ALYKAFEASY (383 aa)) is carbamoyl phosphate synthetic domain. One can recognise an ATP-grasp 2 domain in the interval 671 to 861 (EKALHDINIP…MAQVATKLIL (191 aa)). The ATP site is built by Arg707, Ser746, Ile748, Glu752, Gly777, Val778, His779, Ser780, Gln820, and Glu832. Positions 820, 832, and 834 each coordinate Mg(2+). Gln820, Glu832, and Asn834 together coordinate Mn(2+). One can recognise an MGS-like domain in the interval 930–1058 (MHVPDFGNII…ESRSFSIQSL (129 aa)). Positions 930–1058 (MHVPDFGNII…ESRSFSIQSL (129 aa)) are allosteric domain.

This sequence belongs to the CarB family. As to quaternary structure, composed of two chains; the small (or glutamine) chain promotes the hydrolysis of glutamine to ammonia, which is used by the large (or ammonia) chain to synthesize carbamoyl phosphate. Tetramer of heterodimers (alpha,beta)4. Requires Mg(2+) as cofactor. Mn(2+) is required as a cofactor.

It catalyses the reaction hydrogencarbonate + L-glutamine + 2 ATP + H2O = carbamoyl phosphate + L-glutamate + 2 ADP + phosphate + 2 H(+). The catalysed reaction is hydrogencarbonate + NH4(+) + 2 ATP = carbamoyl phosphate + 2 ADP + phosphate + 2 H(+). It participates in amino-acid biosynthesis; L-arginine biosynthesis; carbamoyl phosphate from bicarbonate: step 1/1. It functions in the pathway pyrimidine metabolism; UMP biosynthesis via de novo pathway; (S)-dihydroorotate from bicarbonate: step 1/3. In terms of biological role, large subunit of the glutamine-dependent carbamoyl phosphate synthetase (CPSase). CPSase catalyzes the formation of carbamoyl phosphate from the ammonia moiety of glutamine, carbonate, and phosphate donated by ATP, constituting the first step of 2 biosynthetic pathways, one leading to arginine and/or urea and the other to pyrimidine nucleotides. The large subunit (synthetase) binds the substrates ammonia (free or transferred from glutamine from the small subunit), hydrogencarbonate and ATP and carries out an ATP-coupled ligase reaction, activating hydrogencarbonate by forming carboxy phosphate which reacts with ammonia to form carbamoyl phosphate. The polypeptide is Carbamoyl phosphate synthase large chain (Streptococcus uberis (strain ATCC BAA-854 / 0140J)).